The chain runs to 506 residues: Probable alpha-L-arabinofuranosidase B (506 aa).

A signal peptide spans M1–A26. Positions G27 to T343 are catalytic. Cystine bridges form between C29/C39, C89/C94, and C184/C185. D227 contacts substrate. E229 functions as the Nucleophile in the catalytic mechanism. N230 is a substrate binding site. N-linked (GlcNAc...) asparagine glycosylation is present at N240. Position 304 (G304) interacts with substrate. The Proton donor role is filled by D305. The tract at residues A344–A506 is ABD. C409 and C447 are oxidised to a cystine. H424, N426, F427, D443, H471, L476, and D496 together coordinate substrate.

It belongs to the glycosyl hydrolase 54 family.

It is found in the secreted. The catalysed reaction is Hydrolysis of terminal non-reducing alpha-L-arabinofuranoside residues in alpha-L-arabinosides.. It functions in the pathway glycan metabolism; L-arabinan degradation. In terms of biological role, alpha-L-arabinofuranosidase involved in the degradation of arabinoxylan, a major component of plant hemicellulose. Able to hydrolyze 1,5-, 1,3- and 1,2-alpha-linkages not only in L-arabinofuranosyl oligosaccharides, but also in polysaccharides containing terminal non-reducing L-arabinofuranoses in side chains, like L-arabinan, arabinogalactan and arabinoxylan. The sequence is that of Probable alpha-L-arabinofuranosidase B (abfB) from Aspergillus fumigatus (strain ATCC MYA-4609 / CBS 101355 / FGSC A1100 / Af293) (Neosartorya fumigata).